Consider the following 82-residue polypeptide: Cytochrome b559 subunit alpha (82 aa).

Residues 22–36 form a helical membrane-spanning segment; that stretch reads VIHAITLPSIFLAGF. Residue H24 coordinates heme.

The protein belongs to the PsbE/PsbF family. In terms of assembly, heterodimer of an alpha subunit and a beta subunit. PSII is composed of 1 copy each of membrane proteins PsbA, PsbB, PsbC, PsbD, PsbE, PsbF, PsbH, PsbI, PsbJ, PsbK, PsbL, PsbM, PsbT, PsbX, PsbY, PsbZ, Psb30/Ycf12, peripheral proteins PsbO, CyanoQ (PsbQ), PsbU, PsbV and a large number of cofactors. It forms dimeric complexes. Heme b serves as cofactor.

The protein localises to the cellular thylakoid membrane. In terms of biological role, this b-type cytochrome is tightly associated with the reaction center of photosystem II (PSII). PSII is a light-driven water:plastoquinone oxidoreductase that uses light energy to abstract electrons from H(2)O, generating O(2) and a proton gradient subsequently used for ATP formation. It consists of a core antenna complex that captures photons, and an electron transfer chain that converts photonic excitation into a charge separation. This is Cytochrome b559 subunit alpha from Synechococcus sp. (strain CC9311).